Here is a 545-residue protein sequence, read N- to C-terminus: Tripartite motif-containing protein 26 (545 aa).

The RING-type zinc-finger motif lies at 16–57 (CSICLDYLRDPVTIDCGHVFCRSCTSDIRPISGNRPVCPLCK). A B box-type zinc finger spans residues 97–138 (QDMKLCERHQEKLHYYCEDDGKLLCVMCRESREHRPHTAVLV). C102, H105, C124, and H130 together coordinate Zn(2+). Residues 197-243 (QFLKKREQHLLDQLATLEQLLTEGREKFKTRGVSELDRLTLVISELE) adopt a coiled-coil conformation. The 245-residue stretch at 301–545 (RGLRQFQGKL…WPGARLLLRP (245 aa)) folds into the B30.2/SPRY domain. A disordered region spans residues 382-443 (REGWSEDEEE…EEEEEVQESC (62 aa)). Residues 386–440 (SEDEEEGEEEEEGEEEEEDEEVGYGDGYEDWETDEEDESLGEEEEEEEEEEEEVQ) are compositionally biased toward acidic residues.

It belongs to the TRIM/RBCC family. In terms of assembly, interacts with TBK1; this interaction bridges together TBK1 and NEMO in order to activate TBK1. Interacts with INCA1. In terms of processing, autoubiquitinates upon viral infection. In turn, autoubiquitinated TRIM26 recruits NEMO and bridges TBK1-NEMO interaction.

It localises to the cytoplasm. Its subcellular location is the nucleus. The catalysed reaction is S-ubiquitinyl-[E2 ubiquitin-conjugating enzyme]-L-cysteine + [acceptor protein]-L-lysine = [E2 ubiquitin-conjugating enzyme]-L-cysteine + N(6)-ubiquitinyl-[acceptor protein]-L-lysine.. E3 ubiquitin-protein ligase which regulates the IFN-beta production and antiviral response downstream of various DNA-encoded pattern-recognition receptors (PRRs). Also plays a central role in determining the response to different forms of oxidative stress by controlling levels of DNA glycosylases NEIL1, NEIL3 and NTH1 that are involved in repair of damaged DNA. Promotes nuclear IRF3 ubiquitination and proteasomal degradation. Bridges together TBK1 and NEMO during the innate response to viral infection leading to the activation of TBK1. Positively regulates LPS-mediated inflammatory innate immune response by catalyzing the 'Lys-11'-linked polyubiquitination of TAB1 to enhance its activation and subsequent NF-kappa-B and MAPK signaling. In a manner independent of its catalytic activity, inhibits WWP2, a SOX2-directed E3 ubiquitin ligase, and thus protects SOX2 from polyubiquitination and proteasomal degradation. Ubiquitinates the histone acetyltransferase protein complex component PHF20 and thereby triggers its degradation in the nucleus after its recruitment by the histone demethylase KDM6B, serving as a scaffold protein. Upon induction by TGF-beta, ubiquitinates the TFIID component TAF7 for proteasomal degradation. Induces ferroptosis by ubiquitinating SLC7A11, a critical protein for lipid reactive oxygen species (ROS) scavenging. This chain is Tripartite motif-containing protein 26 (Trim26), found in Mus musculus (Mouse).